Here is a 552-residue protein sequence, read N- to C-terminus: Kumamolisin (552 aa).

Positions 1 to 17 (MSDMEKPWKEEEKREVL) are enriched in basic and acidic residues. Residues 1 to 34 (MSDMEKPWKEEEKREVLAGHARRQAPQAVDKGPV) are disordered. The region spanning 193–546 (AYTPLDVAQA…IRLLQALLPS (354 aa)) is the Peptidase S53 domain. Active-site charge relay system residues include Glu266, Asp270, and Ser466. The Ca(2+) site is built by Asp504, Ile505, Gly522, Gly524, and Asp526.

In terms of assembly, forms monomeric and dimeric crystals. Ca(2+) is required as a cofactor. Autocatalytically processed.

The protein localises to the secreted. It catalyses the reaction The enzyme preferentially hydrolyzes peptides having an Ala or Pro residue at P2 position and prefers such charged amino acid residues as Glu or Arg at the P2' position. In the oxidized insulin B chain, kumamolysin preferentially cleaves between Leu(15) and Tyr(16).. With respect to regulation, inactivated at 22.4 and 37 degrees Celsius, but not at 60 degrees Celsius, by aldehyde-type inhibitors such as acetyl-Ile-Ala-Phe-CHO and acetyl-Ile-Pro-Phe-CHO. Insensitive to the known carboxyl proteinase inhibitors pepstatin, diazoacetyl-DL-norleucine methyl ester (DAN) and 1,2-epoxy-3-(p-nitrophenoxy)propane (EPNP). Not inhibited by Ala-Ala-Phe-chloromethylketone, an inhibitor of the human tripeptidyl-peptidase 1. Its function is as follows. Thermostable pepstatin-insensitive serine-carboxyl proteinase. Preferentially hydrolyzes synthetic peptides having an Ala or Pro residue at the P2 position and charged amino acids such as Glu or Arg at the P2' position. In vitro, specifically hydrolyzes the Leu-15-Tyr-16 peptide bond in oxidized insulin B-chain. Additional cleavage of oxidized insulin B-chain at Phe-25-Tyr-26 is detected at a considerably lower rate. Can hydrolyze collagen and the chromogenic substrate azocoll. Shows lower activity with albumin and casein. Shows very weak tripeptidyl peptidase activity. This chain is Kumamolisin, found in Bacillus sp. (strain MN-32).